Reading from the N-terminus, the 371-residue chain is Protein RecA (371 aa).

75-82 (GPESSGKT) serves as a coordination point for ATP. Residues 343–371 (KAKDEPIADEDQPIDVVPNFDDQDVEPQN) are disordered.

Belongs to the RecA family.

The protein localises to the cytoplasm. Functionally, can catalyze the hydrolysis of ATP in the presence of single-stranded DNA, the ATP-dependent uptake of single-stranded DNA by duplex DNA, and the ATP-dependent hybridization of homologous single-stranded DNAs. It interacts with LexA causing its activation and leading to its autocatalytic cleavage. This Corynebacterium urealyticum (strain ATCC 43042 / DSM 7109) protein is Protein RecA.